Here is a 118-residue protein sequence, read N- to C-terminus: Large ribosomal subunit protein uL24 (118 aa).

Residues 1 to 24 (MSEQPHKQRTRTKRASLHEKQDQV) are disordered.

The protein belongs to the universal ribosomal protein uL24 family. As to quaternary structure, part of the 50S ribosomal subunit.

One of two assembly initiator proteins, it binds directly to the 5'-end of the 23S rRNA, where it nucleates assembly of the 50S subunit. In terms of biological role, located at the polypeptide exit tunnel on the outside of the subunit. This chain is Large ribosomal subunit protein uL24, found in Halobacterium salinarum (strain ATCC 700922 / JCM 11081 / NRC-1) (Halobacterium halobium).